The sequence spans 133 residues: ATP synthase epsilon chain (133 aa).

The protein belongs to the ATPase epsilon chain family. F-type ATPases have 2 components, CF(1) - the catalytic core - and CF(0) - the membrane proton channel. CF(1) has five subunits: alpha(3), beta(3), gamma(1), delta(1), epsilon(1). CF(0) has three main subunits: a, b and c.

It is found in the cell membrane. Functionally, produces ATP from ADP in the presence of a proton gradient across the membrane. In Lawsonia intracellularis (strain PHE/MN1-00), this protein is ATP synthase epsilon chain.